The chain runs to 210 residues: Cytochrome c biogenesis ATP-binding export protein CcmA (210 aa).

In terms of domain architecture, ABC transporter spans 1-208; the sequence is MHLNQLVISH…KVRTLSLDQF (208 aa). 38-45 is an ATP binding site; that stretch reads GHNGIGKT.

Belongs to the ABC transporter superfamily. CcmA exporter (TC 3.A.1.107) family. The complex is composed of two ATP-binding proteins (CcmA) and two transmembrane proteins (CcmB).

The protein localises to the cell inner membrane. It catalyses the reaction heme b(in) + ATP + H2O = heme b(out) + ADP + phosphate + H(+). Its function is as follows. Part of the ABC transporter complex CcmAB involved in the biogenesis of c-type cytochromes; once thought to export heme, this seems not to be the case, but its exact role is uncertain. Responsible for energy coupling to the transport system. The polypeptide is Cytochrome c biogenesis ATP-binding export protein CcmA (Haemophilus ducreyi (strain 35000HP / ATCC 700724)).